The primary structure comprises 216 residues: uncharacterized protein (216 aa).

Its subcellular location is the plastid. The protein resides in the chloroplast. This is an uncharacterized protein from Pyropia yezoensis (Susabi-nori).